We begin with the raw amino-acid sequence, 500 residues long: Intracellular exo-alpha-(1-&gt;5)-L-arabinofuranosidase 1 (500 aa).

Glu27, Asn72, and Asn172 together coordinate alpha-L-arabinofuranose. Glu173 (proton donor/acceptor) is an active-site residue. Alpha-L-arabinofuranose contacts are provided by Tyr244, Glu292, and Gln349. Residue Glu292 is the Nucleophile of the active site.

It belongs to the glycosyl hydrolase 51 family. As to quaternary structure, homohexamer; trimer of dimers.

Its subcellular location is the cytoplasm. It carries out the reaction Hydrolysis of terminal non-reducing alpha-L-arabinofuranoside residues in alpha-L-arabinosides.. The catalysed reaction is (20S)-ginsenoside Rc + H2O = L-arabinofuranose + (20S)-ginsenoside Rd. The protein operates within glycan metabolism; L-arabinan degradation. At a concentration of 5 mM, K(+), Cu(2+) and Ni(2+) exhibit inhibitory effects on the activity. Additionally, the chemical reagent SDS also displays a certain degree of inhibition. Enzymatic activity is largely unaffected by product feedback inhibition. Functionally, involved in the degradation of arabinan and is a key enzyme in the complete degradation of the plant cell wall. Catalyzes the cleavage of terminal alpha-(1-&gt;5)-arabinofuranosyl bonds in different hemicellulosic homopolysaccharides (branched and debranched arabinans). It acts preferentially on arabinotriose, arabinobiose and linear alpha-(1-&gt;5)-L-arabinan, and is much less effective on branched sugar beet arabinan. When expressed in E.coli, the recombinant enyzme can hydrolyze, with relatively low catalytic efficiency, the terminal alpha-L-arabinofuranoside at the C20 position of ginsenoside Rc to produce ginsenoside Rd, a rare ginsenoside that exhibits diverse and powerful pharmacological activities. The sequence is that of Intracellular exo-alpha-(1-&gt;5)-L-arabinofuranosidase 1 from Bacillus subtilis (strain 168).